The chain runs to 438 residues: Rhomboid-related protein 1 (438 aa).

The interval 1-62 (MGRVEDGGTT…PSQPGPALWS (62 aa)) is disordered. Positions 8-17 (GTTEELEDWD) are enriched in acidic residues. 7 consecutive transmembrane segments (helical) span residues 196 to 216 (PPVF…CYGA), 262 to 282 (GFNA…HGLL), 284 to 304 (ISLL…ITDM), 308 to 328 (VVGG…NVVM), 340 to 359 (LRMV…AVWL), 372 to 392 (PSFM…LTIL), and 405 to 425 (WWVV…WNVF). The Nucleophile role is filled by Ser-312. His-377 is an active-site residue.

The protein belongs to the peptidase S54 family. Detected in heart, brain, skeletal muscle and kidney.

It localises to the membrane. The enzyme catalyses Cleaves type-1 transmembrane domains using a catalytic dyad composed of serine and histidine that are contributed by different transmembrane domains.. Its function is as follows. May be involved in regulated intramembrane proteolysis and the subsequent release of functional polypeptides from their membrane anchors. The polypeptide is Rhomboid-related protein 1 (RHBDL1) (Homo sapiens (Human)).